The primary structure comprises 305 residues: 2-oxoacid:ferredoxin oxidoreductase subunit beta (305 aa).

Positions 12, 15, and 46 each coordinate [4Fe-4S] cluster. Residues 44–47 (IGCS) and His65 contribute to the thiamine diphosphate site. A Mg(2+)-binding site is contributed by Asp90. 91–92 (GD) is a binding site for thiamine diphosphate. The Mg(2+) site is built by Asn118 and Val120. Residue 122–123 (GL) coordinates thiamine diphosphate. [4Fe-4S] cluster is bound at residue Cys197.

In terms of assembly, heterodimer composed of an alpha and a beta subunit. The cofactor is [4Fe-4S] cluster. Requires thiamine diphosphate as cofactor. Mg(2+) is required as a cofactor.

It catalyses the reaction a 2-oxocarboxylate + 2 oxidized [2Fe-2S]-[ferredoxin] + CoA = an acyl-CoA + 2 reduced [2Fe-2S]-[ferredoxin] + CO2 + H(+). Catalyzes the coenzyme A-dependent oxidative decarboxylation of different 2-oxoacids such as 2-oxoglutarate, pyruvate and 2-oxobutyrate to form their CoA derivatives. The chain is 2-oxoacid:ferredoxin oxidoreductase subunit beta from Saccharolobus solfataricus (Sulfolobus solfataricus).